The following is a 963-amino-acid chain: Glycine dehydrogenase (decarboxylating) (963 aa).

Position 707 is an N6-(pyridoxal phosphate)lysine (Lys-707).

It belongs to the GcvP family. In terms of assembly, the glycine cleavage system is composed of four proteins: P, T, L and H. Requires pyridoxal 5'-phosphate as cofactor.

The enzyme catalyses N(6)-[(R)-lipoyl]-L-lysyl-[glycine-cleavage complex H protein] + glycine + H(+) = N(6)-[(R)-S(8)-aminomethyldihydrolipoyl]-L-lysyl-[glycine-cleavage complex H protein] + CO2. Its function is as follows. The glycine cleavage system catalyzes the degradation of glycine. The P protein binds the alpha-amino group of glycine through its pyridoxal phosphate cofactor; CO(2) is released and the remaining methylamine moiety is then transferred to the lipoamide cofactor of the H protein. The chain is Glycine dehydrogenase (decarboxylating) from Dechloromonas aromatica (strain RCB).